Reading from the N-terminus, the 299-residue chain is MTSKVRKAVIPAAGLGTRFLPATKALAKEMLPIVDKPTIQFIVEEALKSGIEDILVVTGKSKRSIEDHFDSNFELEYNLKEKGKTDLLKLVDKTTDMRLHFIRQTHPRGLGDAVLQAKAFVGNEPFVVMLGDDLMDITDEKAVPLTKQLMDDYERTHASTIAVMPVPHDEVSAYGVIAPQGEGKDGLYSVETFVEKPAPEDAPSDLAIIGRYLLTPEIFEILEKQAPGAGNEIQLTDAIDTLNKTQRVFAREFKGARYDVGDKFGFMKTSIDYALKHPQVKDDLKNYLIQLGKELTEKE.

This sequence belongs to the UDPGP type 2 family.

The enzyme catalyses alpha-D-glucose 1-phosphate + UTP + H(+) = UDP-alpha-D-glucose + diphosphate. It participates in carbohydrate metabolism; nucleotide-sugar metabolism. It functions in the pathway capsule biogenesis; capsule polysaccharide biosynthesis. The protein is UTP--glucose-1-phosphate uridylyltransferase (cap4C) of Streptococcus pneumoniae serotype 4 (strain ATCC BAA-334 / TIGR4).